We begin with the raw amino-acid sequence, 316 residues long: uncharacterized protein (316 aa).

This is an uncharacterized protein from Caenorhabditis elegans.